Reading from the N-terminus, the 136-residue chain is MLSNPKRTRFRKQHRGRMKGISYRGNNICFGRYALQALEPAWITSRQIEAGRRAMTRYARRGGKIWVRIFPDKPVTIRPTETRMGSGKGSPEYWVAVVKPGRILYEMAGVSESIARAAISIAACKMPIRTQFVIAE.

Belongs to the universal ribosomal protein uL16 family. In terms of assembly, part of the 50S ribosomal subunit.

The protein localises to the plastid. Its subcellular location is the chloroplast. The polypeptide is Large ribosomal subunit protein uL16c (Chloranthus spicatus (Chulantree)).